The sequence spans 179 residues: Large ribosomal subunit protein bL17 (179 aa).

The tract at residues 127 to 179 (TDTLPDTVIDTGPDSAPDPVPGSEPGSAAGDLPDADTAPADPGESSSNQRVIR) is disordered. Low complexity predominate over residues 154-168 (AAGDLPDADTAPADP). Polar residues predominate over residues 170–179 (ESSSNQRVIR).

This sequence belongs to the bacterial ribosomal protein bL17 family. Part of the 50S ribosomal subunit. Contacts protein L32.

This Tropheryma whipplei (strain TW08/27) (Whipple's bacillus) protein is Large ribosomal subunit protein bL17.